The sequence spans 181 residues: Ribosome maturation factor RimM (181 aa).

The PRC barrel domain occupies 97 to 170; it reads AGEFWLPDLM…RIEVVAIPGL (74 aa).

It belongs to the RimM family. Binds ribosomal protein uS19.

It is found in the cytoplasm. Functionally, an accessory protein needed during the final step in the assembly of 30S ribosomal subunit, possibly for assembly of the head region. Essential for efficient processing of 16S rRNA. May be needed both before and after RbfA during the maturation of 16S rRNA. It has affinity for free ribosomal 30S subunits but not for 70S ribosomes. The polypeptide is Ribosome maturation factor RimM (Gloeobacter violaceus (strain ATCC 29082 / PCC 7421)).